The chain runs to 609 residues: Alpha-fetoprotein (609 aa).

The N-terminal stretch at M1–S18 is a signal peptide. Albumin domains lie at R19–T210, K211–Q402, and K403–S601. H22 is a binding site for Cu(2+). 8 cysteine pairs are disulfide-bonded: C99–C114, C113–C124, C148–C193, C192–C201, C224–C270, C269–C277, C289–C303, and C302–C313. Phosphoserine; by FAM20C is present on residues S111, S115, and S117. N-linked (GlcNAc...) asparagine glycosylation is present at N251. Residue S344 is modified to Phosphoserine; by FAM20C. 7 disulfide bridges follow: C384-C393, C416-C462, C461-C472, C485-C501, C500-C511, C538-C583, and C582-C591. 2 positions are modified to phosphoserine; by FAM20C: S444 and S445.

It belongs to the ALB/AFP/VDB family. Dimeric and trimeric forms have been found in addition to the monomeric form. In terms of processing, independent studies suggest heterogeneity of the N-terminal sequence of the mature protein and of the cleavage site of the signal sequence. Sulfated. Plasma. Synthesized by the fetal liver and yolk sac.

Its subcellular location is the secreted. Its function is as follows. Binds copper, nickel, and fatty acids as well as, and bilirubin less well than, serum albumin. Only a small percentage (less than 2%) of the human AFP shows estrogen-binding properties. The sequence is that of Alpha-fetoprotein (AFP) from Homo sapiens (Human).